A 299-amino-acid polypeptide reads, in one-letter code: Taste receptor type 2 member 5 (299 aa).

Residue Met1 is a topological domain, extracellular. A helical transmembrane segment spans residues 2 to 22 (LSAGLGLLMLVAVVEFLIGLI). At 23 to 45 (GNGVLVVWSFREWIRKFSWSSYN) the chain is on the cytoplasmic side. A helical membrane pass occupies residues 46-66 (LIILGLAGCRFVLQWLIILDL). The Extracellular segment spans residues 67-82 (SLFPLFQSSRWLRYLS). Residues 83-103 (IFWVLVSQASLWFATFLSVFY) form a helical membrane-spanning segment. Residues 104-127 (CKKITTFDHPAYLWLKQRAYNLSL) are Cytoplasmic-facing. The helical transmembrane segment at 128–148 (WCLLGYFIINLLLTVQIGLMF) threads the bilayer. The Extracellular segment spans residues 149–175 (YHPPQGNSSIRYPFESWQYLYAFRLNS). A glycan (N-linked (GlcNAc...) asparagine) is linked at Asn155. The chain crosses the membrane as a helical span at residues 176–196 (GSYLPLMVFLVSSGMLIVSLY). The Cytoplasmic portion of the chain corresponds to 197–223 (THHKKMKVHSAGRRDVRAKAHITALKS). The helical transmembrane segment at 224–244 (LGCFLLLHLVYIMASPFSIAS) threads the bilayer. Topologically, residues 245 to 253 (KTYPPDLTS) are extracellular. The helical transmembrane segment at 254 to 274 (VFIWETLMAAYPSLHSLILIM) threads the bilayer. The Cytoplasmic segment spans residues 275–299 (GIPRVKQTCQKILWKTVCARRCWGP).

It belongs to the G-protein coupled receptor T2R family.

Its subcellular location is the membrane. Its function is as follows. Receptor that may play a role in the perception of bitterness and is gustducin-linked. May play a role in sensing the chemical composition of the gastrointestinal content. The activity of this receptor may stimulate alpha gustducin, mediate PLC-beta-2 activation and lead to the gating of TRPM5. In Pan paniscus (Pygmy chimpanzee), this protein is Taste receptor type 2 member 5 (TAS2R5).